The primary structure comprises 347 residues: NADH-ubiquinone oxidoreductase chain 2 (347 aa).

11 helical membrane-spanning segments follow: residues 1 to 21, 25 to 45, 55 to 75, 96 to 116, 123 to 143, 145 to 165, 178 to 198, 199 to 219, 237 to 257, 274 to 294, and 324 to 344; these read MNPL…LITA, HWFL…PVLT, AAIK…MAIL, LMIL…FWVP, TLTS…SIMY, IFPV…IMVG, ILAY…PYNP, NITI…FLAL, LTWL…LPPL, GTLI…YFYM, and LLLP…PLTF.

The protein belongs to the complex I subunit 2 family. As to quaternary structure, core subunit of respiratory chain NADH dehydrogenase (Complex I) which is composed of 45 different subunits. Interacts with TMEM242.

Its subcellular location is the mitochondrion inner membrane. It carries out the reaction a ubiquinone + NADH + 5 H(+)(in) = a ubiquinol + NAD(+) + 4 H(+)(out). Functionally, core subunit of the mitochondrial membrane respiratory chain NADH dehydrogenase (Complex I) which catalyzes electron transfer from NADH through the respiratory chain, using ubiquinone as an electron acceptor. Essential for the catalytic activity and assembly of complex I. This is NADH-ubiquinone oxidoreductase chain 2 from Symphalangus syndactylus (Siamang).